The following is a 371-amino-acid chain: Putative 26S proteasome regulatory subunit homolog MJ1494 (371 aa).

Residue 161–168 (GPPGTGKT) coordinates ATP.

It belongs to the AAA ATPase family.

Functionally, the 26S proteasome is involved in the ATP-dependent degradation of ubiquitinated proteins. The regulatory (or ATPase) complex confers ATP dependency and substrate specificity to the 26S complex. The sequence is that of Putative 26S proteasome regulatory subunit homolog MJ1494 from Methanocaldococcus jannaschii (strain ATCC 43067 / DSM 2661 / JAL-1 / JCM 10045 / NBRC 100440) (Methanococcus jannaschii).